Here is a 241-residue protein sequence, read N- to C-terminus: Ribonuclease PH (241 aa).

Residues Arg-87 and 125–127 (GTR) each bind phosphate.

This sequence belongs to the RNase PH family. As to quaternary structure, homohexameric ring arranged as a trimer of dimers.

The catalysed reaction is tRNA(n+1) + phosphate = tRNA(n) + a ribonucleoside 5'-diphosphate. Its function is as follows. Phosphorolytic 3'-5' exoribonuclease that plays an important role in tRNA 3'-end maturation. Removes nucleotide residues following the 3'-CCA terminus of tRNAs; can also add nucleotides to the ends of RNA molecules by using nucleoside diphosphates as substrates, but this may not be physiologically important. Probably plays a role in initiation of 16S rRNA degradation (leading to ribosome degradation) during starvation. This is Ribonuclease PH from Nitrosomonas europaea (strain ATCC 19718 / CIP 103999 / KCTC 2705 / NBRC 14298).